The primary structure comprises 214 residues: MRPLILSIFALFLAGCTHSQQSMVDTFRASLFDNQDITVADQQIQALPYSTMYLRLNEGQRIFVVLGYIEQEQSKWLSQDNAMLVTHNGRLLKTVKLNNNLLEVTNSGQDPLRNALAIKDGSRWTRDILWSEDNHFRSATLSSTFSFAGLETLNIAGRNVLCNVWQEEVTSTRPEKQWQNTFWVDSATGQVRQSRQMLGAGVIPVEMTFLKPAP.

The signal sequence occupies residues 1–15 (MRPLILSIFALFLAG). A lipid anchor (N-palmitoyl cysteine) is attached at C16. A lipid anchor (S-diacylglycerol cysteine) is attached at C16.

The protein to E.coli YjbF.

The protein localises to the cell membrane. This is an uncharacterized protein from Escherichia coli (strain K12).